The primary structure comprises 73 residues: Translation initiation factor IF-1 (73 aa).

The 73-residue stretch at 1–73 (MANKEELIEF…SKGRITYRAR (73 aa)) folds into the S1-like domain.

The protein belongs to the IF-1 family. Component of the 30S ribosomal translation pre-initiation complex which assembles on the 30S ribosome in the order IF-2 and IF-3, IF-1 and N-formylmethionyl-tRNA(fMet); mRNA recruitment can occur at any time during PIC assembly.

It localises to the cytoplasm. One of the essential components for the initiation of protein synthesis. Stabilizes the binding of IF-2 and IF-3 on the 30S subunit to which N-formylmethionyl-tRNA(fMet) subsequently binds. Helps modulate mRNA selection, yielding the 30S pre-initiation complex (PIC). Upon addition of the 50S ribosomal subunit IF-1, IF-2 and IF-3 are released leaving the mature 70S translation initiation complex. The protein is Translation initiation factor IF-1 of Acinetobacter baylyi (strain ATCC 33305 / BD413 / ADP1).